The chain runs to 697 residues: PAN2-PAN3 deadenylation complex subunit PAN3 (697 aa).

The C3H1-type zinc-finger motif lies at 7-36; it reads TAKDTLCKNILIYGYCKYENKGCAFSHNRQ. The tract at residues 40–67 is disordered; sequence QQQQATNTSNNSTSVITPNSANSTASSA. 2 consecutive short sequence motifs (PABPC-interacting motif-2 (PAM-2)) follow at residues 69-89 and 106-126; these read LSSK…VSNL and FKPE…TQRP. Residues 106 to 240 form a disordered region; it reads FKPENGVSEP…SAPTPGSETP (135 aa). Residues 119–153 show a composition bias toward polar residues; sequence DSPTTQRPFTSKRFNVSTPSFTPTNFDFANNSNAD. Low complexity predominate over residues 172-187; that stretch reads QNQQQQQQQQQQQQKQ. The segment covering 212–224 has biased composition (polar residues); that stretch reads GVSQSSPSTNPYF. Residues 308 to 576 form a pseudokinase domain region; it reads QSLSHSNLPE…DLNEFSQRLT (269 aa). ATP contacts are provided by residues R361, 416 to 423, and 470 to 471; these read DYYPNSIS and SK. The stretch at 577–615 forms a coiled coil; the sequence is PKMFNIIDSLQNSSDFIEGQLTSELENARLFRLMTKLNY. A knob domain region spans residues 616 to 697; sequence LIHDNSNSEN…IDTKFRLMRE (82 aa).

The protein belongs to the protein kinase superfamily. PAN3 family. Homodimer. Forms a heterotrimer with a catalytic subunit PAN2 to form the poly(A)-nuclease (PAN) deadenylation complex. Interacts (via PAM-2 motif) with poly(A)-binding protein PAB1 (via PABC domain), conferring substrate specificity of the enzyme complex.

Its subcellular location is the cytoplasm. Functionally, regulatory subunit of the poly(A)-nuclease (PAN) deadenylation complex, one of two cytoplasmic mRNA deadenylases involved in mRNA turnover. PAN specifically shortens poly(A) tails of RNA and the activity is stimulated by poly(A)-binding protein PAB1. PAN deadenylation is followed by rapid degradation of the shortened mRNA tails by the CCR4-NOT complex. Deadenylated mRNAs are then degraded by two alternative mechanisms, namely exosome-mediated 3'-5' exonucleolytic degradation, or deadenylation-dependent mRNA decaping and subsequent 5'-3' exonucleolytic degradation by XRN1. May also be involved in post-transcriptional maturation of mRNA poly(A) tails. PAN3 acts as a positive regulator for PAN activity, recruiting the catalytic subunit PAN2 to mRNA via its interaction with RNA and with PAB1. The polypeptide is PAN2-PAN3 deadenylation complex subunit PAN3 (Candida albicans (strain SC5314 / ATCC MYA-2876) (Yeast)).